The sequence spans 83 residues: uncharacterized protein (83 aa).

It belongs to the UPF0440 family.

This is an uncharacterized protein from Natronomonas pharaonis (strain ATCC 35678 / DSM 2160 / CIP 103997 / JCM 8858 / NBRC 14720 / NCIMB 2260 / Gabara) (Halobacterium pharaonis).